Reading from the N-terminus, the 129-residue chain is uncharacterized protein (129 aa).

This is an uncharacterized protein from Haemophilus influenzae (strain ATCC 51907 / DSM 11121 / KW20 / Rd).